A 779-amino-acid polypeptide reads, in one-letter code: MEGSRPRSSLSLASSASTISSLSSLSPKKPTRAVNKIHAFGKRGNALRRDPNLPVHIRGWLHKQDSSGLRLWKRRWFVLSGHCLFYYKDSREESVLGSVLLPSYNIRPDGPGAPRGRRFTFTAEHPGMRTYVLAADTLEDLRGWLRALGRASRAEGDDYGQPRSPARPQPGEGPGGPGGPPEVSRGEEGRISESPEVTRLSRGRGRPRLLTPSPTTDLHSGLQMRRARSPDLFTPLSRPPSPLSLPRPRSAPARRPPAPSGDTAPPARPHTPLSRIDVRPPLDWGPQRQTLSRPPTPRRGPPSEAGGGKPPRSPQHWSQEPRTQAHSGSPTYLQLPPRPPGTRASMVLLPGPPLESTFHQSLETDTLLTKLCGQDRLLRRLQEEIDQKQEEKEQLEAALELTRQQLGQATREAGAPGRAWGRQRLLQDRLVSVRATLCHLTQERERVWDTYSGLEQELGTLRETLEYLLHLGSPQDRVSAQQQLWMVEDTLAGLGGPQKPPPHTEPDSPSPVLQGEESSERESLPESLELSSPRSPETDWGRPPGGDKDLASPHLGLGSPRVSRASSPEGRHLPSPQLGTKAPVARPRMSAQEQLERMRRNQECGRPFPRPTSPRLLTLGRTLSPARRQPDVEQRPVVGHSGAQKWLRSSGSWSSPRNTTPYLPTSEGHRERVLSLSQALATEASQWHRMMTGGNLDSQGDPLPGVPLPPSDPTRQETPPPRSPPVANSGSTGFSRRGSGRGGGPTPWGPAWDAGIAPPVLPQDEGAWPLRVTLLQSSF.

The PH domain occupies 54–153 (PVHIRGWLHK…WLRALGRASR (100 aa)). Disordered stretches follow at residues 152–352 (SRAE…LPGP), 492–670 (AGLG…EGHR), and 691–764 (MTGG…LPQD). S164 carries the phosphoserine modification. Residues 184 to 193 (SRGEEGRISE) are compositionally biased toward basic and acidic residues. Residues 315–332 (QHWSQEPRTQAHSGSPTY) show a composition bias toward polar residues. The span at 525–535 (PESLELSSPRS) shows a compositional bias: low complexity. Residues 536–551 (PETDWGRPPGGDKDLA) are compositionally biased toward basic and acidic residues. A Phosphoserine modification is found at S559. Residues 594–603 (QLERMRRNQE) are compositionally biased toward basic and acidic residues. The segment covering 647–663 (LRSSGSWSSPRNTTPYL) has biased composition (polar residues). The segment covering 704–724 (PGVPLPPSDPTRQETPPPRSP) has biased composition (pro residues).

As to expression, highly expressed in melanoma. Detected at low levels in heart, skeletal muscle, kidney, liver and small intestine.

It is found in the cytoplasm. Its subcellular location is the membrane. Functionally, binds specifically to phosphatidylinositol 3-phosphate (PtdIns3P), but not to other phosphoinositides. The protein is Pleckstrin homology domain-containing family A member 4 (PLEKHA4) of Homo sapiens (Human).